Here is a 254-residue protein sequence, read N- to C-terminus: Phosphoribosylaminoimidazole-succinocarboxamide synthase (254 aa).

The protein belongs to the SAICAR synthetase family.

The enzyme catalyses 5-amino-1-(5-phospho-D-ribosyl)imidazole-4-carboxylate + L-aspartate + ATP = (2S)-2-[5-amino-1-(5-phospho-beta-D-ribosyl)imidazole-4-carboxamido]succinate + ADP + phosphate + 2 H(+). Its pathway is purine metabolism; IMP biosynthesis via de novo pathway; 5-amino-1-(5-phospho-D-ribosyl)imidazole-4-carboxamide from 5-amino-1-(5-phospho-D-ribosyl)imidazole-4-carboxylate: step 1/2. This is Phosphoribosylaminoimidazole-succinocarboxamide synthase from Bartonella tribocorum (strain CIP 105476 / IBS 506).